Here is a 730-residue protein sequence, read N- to C-terminus: Patatin-like phospholipase domain-containing protein CIMG_04897 (730 aa).

Over residues 1-11 (MTANSSRRRLQ) the composition is skewed to basic residues. A disordered region spans residues 1–26 (MTANSSRRRLQMKSPRTDGDEKEEDY). A helical membrane pass occupies residues 97–117 (WPFLLFVLSWIVFLGALYILT). Residues 281 to 472 (LCLSGGATLA…RTDIPLKALD (192 aa)) enclose the PNPLA domain. Positions 312-316 (GTSGG) match the GXSXG motif. Ser314 acts as the Nucleophile in catalysis. Asp459 (proton acceptor) is an active-site residue. The segment at 667 to 730 (GHFREAPTSH…QGQSSGTKIG (64 aa)) is disordered. Residues 721–730 (QGQSSGTKIG) show a composition bias toward polar residues.

Belongs to the PLPL family.

The protein localises to the membrane. Its function is as follows. Probable lipid hydrolase. In Coccidioides immitis (strain RS) (Valley fever fungus), this protein is Patatin-like phospholipase domain-containing protein CIMG_04897.